The following is a 187-amino-acid chain: Cytokinin riboside 5'-monophosphate phosphoribohydrolase (187 aa).

Residue K74 forms an Isoglutamyl lysine isopeptide (Lys-Gln) (interchain with Q-Cter in protein Pup) linkage. Residues E80, 98–99 (RK), 115–121 (GVGTLDE), and T127 contribute to the substrate site.

The protein belongs to the LOG family. In terms of assembly, homodimer. Post-translationally, pupylated at Lys-74 by the prokaryotic ubiquitin-like protein Pup, which leads to its degradation by the proteasome. The proteasomal control of cytokinin synthesis is essential to protect M.tuberculosis against host-produced NO.

The catalysed reaction is N(6)-(dimethylallyl)adenosine 5'-phosphate + H2O = N(6)-dimethylallyladenine + D-ribose 5-phosphate. It carries out the reaction 9-ribosyl-trans-zeatin 5'-phosphate + H2O = trans-zeatin + D-ribose 5-phosphate. Catalyzes the hydrolytic removal of ribose 5'-monophosphate from nitrogen N6-modified adenosines, the final step of bioactive cytokinin synthesis. Is involved in the synthesis of isopentenyladenine (iP) and 2-methylthio-iP (2MeS-iP), the most abundant cytokinins detected in M.tuberculosis lysates and supernatants. Is also able to convert trans-zeatin-riboside monophosphate (tZRMP) to trans-zeatin (tZ) in vitro; however, it may not be involved in the biosynthesis of this minor cytokinin in vivo. Accumulation of Rv1205 sensitizes M.tuberculosis to nitric oxide since cytokinin breakdown products synergize with NO to kill M.tuberculosis. Shows a slow AMP hydrolase activity, but is not able to hydrolyze ATP. Displays no lysine decarboxylase (LDC) activity (L-lysine conversion to cadaverine). The sequence is that of Cytokinin riboside 5'-monophosphate phosphoribohydrolase from Mycobacterium tuberculosis (strain ATCC 25618 / H37Rv).